A 163-amino-acid polypeptide reads, in one-letter code: Nucleotide-binding protein ECA1137 (163 aa).

This sequence belongs to the YajQ family.

Its function is as follows. Nucleotide-binding protein. The chain is Nucleotide-binding protein ECA1137 from Pectobacterium atrosepticum (strain SCRI 1043 / ATCC BAA-672) (Erwinia carotovora subsp. atroseptica).